The sequence spans 287 residues: Protease HtpX (287 aa).

2 consecutive transmembrane segments (helical) span residues 4–24 (IFLLIATNMAILLVASIVMSI) and 33–53 (GGLLVFAAIFGFGGAFISLAI). A Zn(2+)-binding site is contributed by histidine 139. Glutamate 140 is a catalytic residue. Histidine 143 contacts Zn(2+). Helical transmembrane passes span 154–174 (LIQGVVNTFVIFAARVVAGII) and 195–215 (AVVFVLDMLFGILASMIVAYF). Position 220 (glutamate 220) interacts with Zn(2+).

This sequence belongs to the peptidase M48B family. Requires Zn(2+) as cofactor.

It localises to the cell inner membrane. The chain is Protease HtpX from Shewanella pealeana (strain ATCC 700345 / ANG-SQ1).